We begin with the raw amino-acid sequence, 264 residues long: Tryptophan synthase alpha chain (264 aa).

Residues Glu-49 and Asp-60 each act as proton acceptor in the active site.

It belongs to the TrpA family. As to quaternary structure, tetramer of two alpha and two beta chains.

The catalysed reaction is (1S,2R)-1-C-(indol-3-yl)glycerol 3-phosphate + L-serine = D-glyceraldehyde 3-phosphate + L-tryptophan + H2O. Its pathway is amino-acid biosynthesis; L-tryptophan biosynthesis; L-tryptophan from chorismate: step 5/5. The alpha subunit is responsible for the aldol cleavage of indoleglycerol phosphate to indole and glyceraldehyde 3-phosphate. The polypeptide is Tryptophan synthase alpha chain (Picosynechococcus sp. (strain ATCC 27264 / PCC 7002 / PR-6) (Agmenellum quadruplicatum)).